A 154-amino-acid polypeptide reads, in one-letter code: Transcriptional repressor NrdR (154 aa).

A zinc finger lies at 3–34 (CPFCGNDETKVLESRQVEEGTAVRRRRECERC). Residues 49–139 (LIVVKKDGRR…VYREFKDVQR (91 aa)) form the ATP-cone domain.

Belongs to the NrdR family. Requires Zn(2+) as cofactor.

Negatively regulates transcription of bacterial ribonucleotide reductase nrd genes and operons by binding to NrdR-boxes. The polypeptide is Transcriptional repressor NrdR (Desulfitobacterium hafniense (strain DSM 10664 / DCB-2)).